Reading from the N-terminus, the 432-residue chain is Glutamyl-tRNA reductase (432 aa).

Substrate-binding positions include 55–58 (TCNR), Ser-114, 119–121 (ETQ), and Gln-125. The active-site Nucleophile is Cys-56. Position 194 to 199 (194 to 199 (GAGEMI)) interacts with NADP(+).

It belongs to the glutamyl-tRNA reductase family. As to quaternary structure, homodimer.

The catalysed reaction is (S)-4-amino-5-oxopentanoate + tRNA(Glu) + NADP(+) = L-glutamyl-tRNA(Glu) + NADPH + H(+). Its pathway is porphyrin-containing compound metabolism; protoporphyrin-IX biosynthesis; 5-aminolevulinate from L-glutamyl-tRNA(Glu): step 1/2. In terms of biological role, catalyzes the NADPH-dependent reduction of glutamyl-tRNA(Glu) to glutamate 1-semialdehyde (GSA). In Burkholderia ambifaria (strain MC40-6), this protein is Glutamyl-tRNA reductase.